Here is an 80-residue protein sequence, read N- to C-terminus: Large ribosomal subunit protein uL30 (80 aa).

Belongs to the universal ribosomal protein uL30 family. Part of the 50S ribosomal subunit.

The polypeptide is Large ribosomal subunit protein uL30 (Vesicomyosocius okutanii subsp. Calyptogena okutanii (strain HA)).